A 612-amino-acid chain; its full sequence is UvrABC system protein C (612 aa).

The GIY-YIG domain maps to 20 to 98 (THSGVYRMLD…IKQHRPKYNI (79 aa)). The 36-residue stretch at 208–243 (SSVLEEISANMYQASEDMEYEKAQVYRDQLVVLRKL) folds into the UVR domain.

This sequence belongs to the UvrC family. As to quaternary structure, interacts with UvrB in an incision complex.

Its subcellular location is the cytoplasm. The UvrABC repair system catalyzes the recognition and processing of DNA lesions. UvrC both incises the 5' and 3' sides of the lesion. The N-terminal half is responsible for the 3' incision and the C-terminal half is responsible for the 5' incision. In Francisella tularensis subsp. holarctica (strain LVS), this protein is UvrABC system protein C.